The primary structure comprises 2078 residues: Autophagy-related protein 2 homolog B (2078 aa).

One can recognise a Chorein N-terminal domain in the interval 13-108 (ACRYLLQRYL…EMVFRPRPRP (96 aa)). Phosphoserine is present on residues serine 255 and serine 379. Residues 473-495 (GSTFPSNLVHPTPLQKTSLPSRS) form a disordered region. Positions 486–495 (LQKTSLPSRS) are enriched in polar residues. Phosphoserine occurs at positions 497, 840, 886, 899, and 1008. The tract at residues 868 to 888 (EEEENDGHYQEEEEGGAHSLK) is disordered. Positions 873–888 (DGHYQEEEEGGAHSLK) are enriched in basic and acidic residues. Tyrosine 1012 carries the post-translational modification Phosphotyrosine. Serine 1016 and serine 1018 each carry phosphoserine. Position 1022 is a phosphothreonine (threonine 1022). The disordered stretch occupies residues 1375–1405 (ADMKPGAFQRRSKVDSSGRSSSRGPVLPEAD). Serine 1526 is modified (phosphoserine).

Belongs to the ATG2 family. As to quaternary structure, interacts with WDR45/WIPI4.

Its subcellular location is the preautophagosomal structure membrane. It is found in the lipid droplet. It localises to the endoplasmic reticulum membrane. It carries out the reaction a 1,2-diacyl-sn-glycero-3-phospho-L-serine(in) = a 1,2-diacyl-sn-glycero-3-phospho-L-serine(out). The enzyme catalyses a 1,2-diacyl-sn-glycero-3-phosphoethanolamine(in) = a 1,2-diacyl-sn-glycero-3-phosphoethanolamine(out). Functionally, lipid transfer protein required for both autophagosome formation and regulation of lipid droplet morphology and dispersion. Tethers the edge of the isolation membrane (IM) to the endoplasmic reticulum (ER) and mediates direct lipid transfer from ER to IM for IM expansion. Binds to the ER exit site (ERES), which is the membrane source for autophagosome formation, and extracts phospholipids from the membrane source and transfers them to ATG9 (ATG9A or ATG9B) to the IM for membrane expansion. Lipid transfer activity is enhanced by WDR45/WIPI4, which promotes ATG2B-association with phosphatidylinositol 3-monophosphate (PI3P)-containing membranes. The chain is Autophagy-related protein 2 homolog B from Homo sapiens (Human).